The chain runs to 150 residues: Head completion nuclease (150 aa).

Active-site residues include glutamate 29, aspartate 68, and lysine 84.

It belongs to the Caudovirales head completion nuclease family.

In terms of biological role, during phage morphogenesis, plays an essential role in the head-tail joining step. The associated nuclease activity is essential for morphogenesis, possibly by cleaving packaged DNA to enable the joining of heads to tails. Displays both exo- and endonuclease activity. The protein is Head completion nuclease (50) of Enterobacteria phage T4 (Bacteriophage T4).